A 332-amino-acid polypeptide reads, in one-letter code: UDP-N-acetylenolpyruvoylglucosamine reductase (332 aa).

An FAD-binding PCMH-type domain is found at 55-221 (VGGAADLYVA…TQATLQLAPG (167 aa)). Residue Arg-200 is part of the active site. Catalysis depends on Ser-251, which acts as the Proton donor. The active site involves Glu-321.

Belongs to the MurB family. FAD is required as a cofactor.

The protein resides in the cytoplasm. The enzyme catalyses UDP-N-acetyl-alpha-D-muramate + NADP(+) = UDP-N-acetyl-3-O-(1-carboxyvinyl)-alpha-D-glucosamine + NADPH + H(+). It participates in cell wall biogenesis; peptidoglycan biosynthesis. Its function is as follows. Cell wall formation. The protein is UDP-N-acetylenolpyruvoylglucosamine reductase of Nostoc punctiforme (strain ATCC 29133 / PCC 73102).